A 660-amino-acid chain; its full sequence is T-box protein H15 (660 aa).

The span at 1 to 11 (MLLSNQPANTK) shows a compositional bias: polar residues. 3 disordered regions span residues 1-72 (MLLS…NHNQ), 90-122 (GGNA…DDVD), and 169-266 (QQQQ…PKIV). Over residues 12 to 22 (PQQTPSPSQTQ) the composition is skewed to low complexity. Residues 23 to 33 (NFKSKLQQQIV) show a composition bias toward polar residues. The segment covering 35–47 (AAAAAAANIANGS) has biased composition (low complexity). Over residues 48–71 (SHHHHHQNHHHHHPLNNHHNHNHN) the composition is skewed to basic residues. Composition is skewed to low complexity over residues 93-108 (APSS…SPAS) and 169-179 (QQQQQQQQQRQ). Residues 180 to 198 (QTHHHATTGKQQRQHHNHH) show a composition bias toward basic residues. Over residues 199–233 (SSNTNNSSNSGNSNTNSKSSSQRGRSAAAVGAAAT) the composition is skewed to low complexity. Residues 234–243 (PSPPPPPPSQ) are compositionally biased toward pro residues. A DNA-binding region (T-box) is located at residues 286–472 (LWDKFHELGT…SNPFAKGFRD (187 aa)). The segment at 598-660 (NRTPPPSMAV…PPASNRAESP (63 aa)) is disordered. The span at 600-613 (TPPPSMAVAPPAPA) shows a compositional bias: pro residues. The segment covering 614–624 (TPTSSCGSASP) has biased composition (low complexity). Positions 643 to 660 (QVPQHQASPPASNRAESP) are enriched in polar residues.

It is found in the nucleus. The sequence is that of T-box protein H15 (H15) from Drosophila melanogaster (Fruit fly).